Consider the following 107-residue polypeptide: Small ribosomal subunit protein uS10 (107 aa).

It belongs to the universal ribosomal protein uS10 family. As to quaternary structure, part of the 30S ribosomal subunit.

Involved in the binding of tRNA to the ribosomes. This is Small ribosomal subunit protein uS10 from Deinococcus geothermalis (strain DSM 11300 / CIP 105573 / AG-3a).